A 65-amino-acid chain; its full sequence is Large ribosomal subunit protein bL35 (65 aa).

The protein belongs to the bacterial ribosomal protein bL35 family.

The chain is Large ribosomal subunit protein bL35 from Sorangium cellulosum (strain So ce56) (Polyangium cellulosum (strain So ce56)).